The primary structure comprises 575 residues: 5-aminolevulinate synthase, mitochondrial (575 aa).

The transit peptide at Met-1–Tyr-55 directs the protein to the mitochondrion. Positions 124, 237, and 256 each coordinate substrate. Ser-289, His-317, and Thr-361 together coordinate pyridoxal 5'-phosphate. Lys-364 is a catalytic residue. At Lys-364 the chain carries N6-(pyridoxal phosphate)lysine. Pyridoxal 5'-phosphate contacts are provided by Thr-393 and Thr-394. Thr-479 contributes to the substrate binding site.

It belongs to the class-II pyridoxal-phosphate-dependent aminotransferase family. Homodimer. Requires pyridoxal 5'-phosphate as cofactor.

Its subcellular location is the mitochondrion matrix. It carries out the reaction succinyl-CoA + glycine + H(+) = 5-aminolevulinate + CO2 + CoA. It functions in the pathway porphyrin-containing compound metabolism; protoporphyrin-IX biosynthesis; 5-aminolevulinate from glycine: step 1/1. Catalyzes the synthesis of 5-aminolevulinate (ALA) from succinyl-CoA and glycine, the first and rate-limiting step in heme biosynthesis. The chain is 5-aminolevulinate synthase, mitochondrial (HEM1) from Debaryomyces hansenii (strain ATCC 36239 / CBS 767 / BCRC 21394 / JCM 1990 / NBRC 0083 / IGC 2968) (Yeast).